Reading from the N-terminus, the 444-residue chain is MSQSYINVIGAGLAGSEAAYQIAERGIPVKLYEMRGVKSTPQHKTDNFAELVCSNSLRGDALTNAVGLLKEEMRRLGSVILESAEATRVPAGGALAVDRDGFSQMVTEKVANHPLIEVVRDEITELPTDVITVIATGPLTSDALAEKIHALNDGDGFYFYDAAAPIIDVNTIDMSKVYLKSRYDKGEAAYLNAPMTKQEFMDFHEALVNAEEAPLNSFEKEKYFEGCMPIEVMAKRGIKTMLYGPMKPVGLEYPDDYTGPRDGEFKTPYAVVQLRQDNAAGSLYNIVGFQTHLKWGEQKRVFQMIPGLENAEFVRYGVMHRNSYMDSPNLLEQTYRSKKQPNLFFAGQMTGVEGYVESAASGLVAGINAARLFKEESEVIFPETTAIGSLAHYITHADSKHFQPMNVNFGIIKELEGERIRDKKARYEKIAERALADLEEFLTV.

10–15 contributes to the FAD binding site; it reads GAGLAG.

It belongs to the MnmG family. TrmFO subfamily. The cofactor is FAD.

It is found in the cytoplasm. It carries out the reaction uridine(54) in tRNA + (6R)-5,10-methylene-5,6,7,8-tetrahydrofolate + NADH + H(+) = 5-methyluridine(54) in tRNA + (6S)-5,6,7,8-tetrahydrofolate + NAD(+). The enzyme catalyses uridine(54) in tRNA + (6R)-5,10-methylene-5,6,7,8-tetrahydrofolate + NADPH + H(+) = 5-methyluridine(54) in tRNA + (6S)-5,6,7,8-tetrahydrofolate + NADP(+). Its function is as follows. Catalyzes the folate-dependent formation of 5-methyl-uridine at position 54 (M-5-U54) in all tRNAs. This chain is Methylenetetrahydrofolate--tRNA-(uracil-5-)-methyltransferase TrmFO, found in Streptococcus pneumoniae serotype 2 (strain D39 / NCTC 7466).